The primary structure comprises 219 residues: Response regulator ArlR (219 aa).

The 114-residue stretch at 3 to 116 (QILIVEDEQN…ELLARIRAIL (114 aa)) folds into the Response regulatory domain. Position 52 is a 4-aspartylphosphate (D52). Residues 122–219 (KDIIDVNGIT…TVRGVGYVIR (98 aa)) constitute a DNA-binding region (ompR/PhoB-type).

In terms of processing, phosphorylated by ArlS.

The protein resides in the cytoplasm. In terms of biological role, member of the two-component regulatory system ArlS/ArlR involved in the regulation of adhesion, autolysis, multidrug resistance and virulence. The sequence is that of Response regulator ArlR (arlR) from Staphylococcus aureus (strain USA300).